The sequence spans 324 residues: Beta-ketoacyl-[acyl-carrier-protein] synthase III (324 aa).

Residues Cys-114 and His-246 contribute to the active site. Residues Gln-247–Arg-251 are ACP-binding. Asn-276 is a catalytic residue.

This sequence belongs to the thiolase-like superfamily. FabH family. In terms of assembly, homodimer.

It is found in the cytoplasm. It carries out the reaction malonyl-[ACP] + acetyl-CoA + H(+) = 3-oxobutanoyl-[ACP] + CO2 + CoA. It participates in lipid metabolism; fatty acid biosynthesis. Catalyzes the condensation reaction of fatty acid synthesis by the addition to an acyl acceptor of two carbons from malonyl-ACP. Catalyzes the first condensation reaction which initiates fatty acid synthesis and may therefore play a role in governing the total rate of fatty acid production. Possesses both acetoacetyl-ACP synthase and acetyl transacylase activities. Its substrate specificity determines the biosynthesis of branched-chain and/or straight-chain of fatty acids. The chain is Beta-ketoacyl-[acyl-carrier-protein] synthase III from Campylobacter jejuni subsp. doylei (strain ATCC BAA-1458 / RM4099 / 269.97).